The primary structure comprises 264 residues: 5'-nucleotidase SurE (264 aa).

A divalent metal cation-binding residues include Asp8, Asp9, Ser39, and Asn95.

The protein belongs to the SurE nucleotidase family. A divalent metal cation is required as a cofactor.

The protein localises to the cytoplasm. It carries out the reaction a ribonucleoside 5'-phosphate + H2O = a ribonucleoside + phosphate. Functionally, nucleotidase that shows phosphatase activity on nucleoside 5'-monophosphates. This Syntrophomonas wolfei subsp. wolfei (strain DSM 2245B / Goettingen) protein is 5'-nucleotidase SurE.